The primary structure comprises 149 residues: Ribosome-binding factor A (149 aa).

The segment at 123–149 (LAKLREGAAPAGDADPYKTSSKSESEE) is disordered.

It belongs to the RbfA family. Monomer. Binds 30S ribosomal subunits, but not 50S ribosomal subunits or 70S ribosomes.

It localises to the cytoplasm. In terms of biological role, one of several proteins that assist in the late maturation steps of the functional core of the 30S ribosomal subunit. Associates with free 30S ribosomal subunits (but not with 30S subunits that are part of 70S ribosomes or polysomes). Required for efficient processing of 16S rRNA. May interact with the 5'-terminal helix region of 16S rRNA. This chain is Ribosome-binding factor A, found in Corynebacterium glutamicum (strain ATCC 13032 / DSM 20300 / JCM 1318 / BCRC 11384 / CCUG 27702 / LMG 3730 / NBRC 12168 / NCIMB 10025 / NRRL B-2784 / 534).